The chain runs to 412 residues: Tyrosine--tRNA ligase (412 aa).

Residue tyrosine 41 coordinates L-tyrosine. A 'HIGH' region motif is present at residues alanine 46–histidine 55. L-tyrosine-binding residues include tyrosine 174 and glutamine 178. The 'KMSKS' region motif lies at lysine 234–serine 238. ATP is bound at residue lysine 237. In terms of domain architecture, S4 RNA-binding spans leucine 348–glutamate 411.

The protein belongs to the class-I aminoacyl-tRNA synthetase family. TyrS type 1 subfamily. Homodimer.

It is found in the cytoplasm. It carries out the reaction tRNA(Tyr) + L-tyrosine + ATP = L-tyrosyl-tRNA(Tyr) + AMP + diphosphate + H(+). Its function is as follows. Catalyzes the attachment of tyrosine to tRNA(Tyr) in a two-step reaction: tyrosine is first activated by ATP to form Tyr-AMP and then transferred to the acceptor end of tRNA(Tyr). The chain is Tyrosine--tRNA ligase from Pseudomonas aeruginosa (strain LESB58).